A 152-amino-acid polypeptide reads, in one-letter code: Nucleoside diphosphate kinase A 1 (152 aa).

ATP is bound by residues Lys-12, Phe-60, Arg-88, Thr-94, Arg-105, and Asn-115. His-118 (pros-phosphohistidine intermediate) is an active-site residue.

This sequence belongs to the NDK family. As to quaternary structure, homohexamer. The cofactor is Mg(2+). The N-terminus is blocked.

It is found in the cytoplasm. The protein localises to the cell membrane. It localises to the nucleus. It catalyses the reaction a 2'-deoxyribonucleoside 5'-diphosphate + ATP = a 2'-deoxyribonucleoside 5'-triphosphate + ADP. The catalysed reaction is a ribonucleoside 5'-diphosphate + ATP = a ribonucleoside 5'-triphosphate + ADP. Its activity is regulated as follows. Autophosphorylation at His-118 increases serine/threonine protein kinase activity of the enzyme. Interaction with the SET complex inhibits exonuclease activity. Functionally, major role in the synthesis of nucleoside triphosphates other than ATP. Possesses nucleoside-diphosphate kinase, serine/threonine-specific protein kinase, geranyl and farnesyl pyrophosphate kinase, histidine protein kinase and 3'-5' exonuclease activities. Involved in cell proliferation, differentiation and development, signal transduction, G protein-coupled receptor endocytosis, and gene expression. Required for neural development including neural patterning and cell fate determination. This chain is Nucleoside diphosphate kinase A 1 (NME1-1), found in Bos taurus (Bovine).